We begin with the raw amino-acid sequence, 253 residues long: 3-dehydroquinate dehydratase (253 aa).

3-dehydroquinate is bound by residues Glu-46–Arg-48 and Arg-82. The active-site Proton donor/acceptor is His-143. The Schiff-base intermediate with substrate role is filled by Lys-170. 3-dehydroquinate is bound by residues Arg-213, Ser-232, and Gln-236.

It belongs to the type-I 3-dehydroquinase family. In terms of assembly, homodimer.

The catalysed reaction is 3-dehydroquinate = 3-dehydroshikimate + H2O. The protein operates within metabolic intermediate biosynthesis; chorismate biosynthesis; chorismate from D-erythrose 4-phosphate and phosphoenolpyruvate: step 3/7. Functionally, involved in the third step of the chorismate pathway, which leads to the biosynthesis of aromatic amino acids. Catalyzes the cis-dehydration of 3-dehydroquinate (DHQ) and introduces the first double bond of the aromatic ring to yield 3-dehydroshikimate. The protein is 3-dehydroquinate dehydratase of Syntrophotalea carbinolica (strain DSM 2380 / NBRC 103641 / GraBd1) (Pelobacter carbinolicus).